A 380-amino-acid polypeptide reads, in one-letter code: Beta sliding clamp (380 aa).

Belongs to the beta sliding clamp family. As to quaternary structure, forms a ring-shaped head-to-tail homodimer around DNA which binds and tethers DNA polymerases and other proteins to the DNA. The DNA replisome complex has a single clamp-loading complex (3 tau and 1 each of delta, delta', psi and chi subunits) which binds 3 Pol III cores (1 core on the leading strand and 2 on the lagging strand) each with a beta sliding clamp dimer. Additional proteins in the replisome are other copies of gamma, psi and chi, Ssb, DNA helicase and RNA primase.

It is found in the cytoplasm. Confers DNA tethering and processivity to DNA polymerases and other proteins. Acts as a clamp, forming a ring around DNA (a reaction catalyzed by the clamp-loading complex) which diffuses in an ATP-independent manner freely and bidirectionally along dsDNA. Initially characterized for its ability to contact the catalytic subunit of DNA polymerase III (Pol III), a complex, multichain enzyme responsible for most of the replicative synthesis in bacteria; Pol III exhibits 3'-5' exonuclease proofreading activity. The beta chain is required for initiation of replication as well as for processivity of DNA replication. This chain is Beta sliding clamp (dnaN), found in Mycoplasma pneumoniae (strain ATCC 29342 / M129 / Subtype 1) (Mycoplasmoides pneumoniae).